Reading from the N-terminus, the 495-residue chain is UDP-N-acetylmuramoyl-L-alanyl-D-glutamate--2,6-diaminopimelate ligase (495 aa).

Serine 29 lines the UDP-N-acetyl-alpha-D-muramoyl-L-alanyl-D-glutamate pocket. Glycine 111–serine 117 serves as a coordination point for ATP. UDP-N-acetyl-alpha-D-muramoyl-L-alanyl-D-glutamate-binding positions include threonine 153–threonine 154, serine 180, glutamine 186, and arginine 188. Position 220 is an N6-carboxylysine (lysine 220). Meso-2,6-diaminopimelate is bound by residues arginine 384, aspartate 408–arginine 411, glycine 459, and glutamate 463. The Meso-diaminopimelate recognition motif motif lies at aspartate 408–arginine 411.

It belongs to the MurCDEF family. MurE subfamily. The cofactor is Mg(2+). Post-translationally, carboxylation is probably crucial for Mg(2+) binding and, consequently, for the gamma-phosphate positioning of ATP.

Its subcellular location is the cytoplasm. It carries out the reaction UDP-N-acetyl-alpha-D-muramoyl-L-alanyl-D-glutamate + meso-2,6-diaminopimelate + ATP = UDP-N-acetyl-alpha-D-muramoyl-L-alanyl-gamma-D-glutamyl-meso-2,6-diaminopimelate + ADP + phosphate + H(+). The protein operates within cell wall biogenesis; peptidoglycan biosynthesis. In terms of biological role, catalyzes the addition of meso-diaminopimelic acid to the nucleotide precursor UDP-N-acetylmuramoyl-L-alanyl-D-glutamate (UMAG) in the biosynthesis of bacterial cell-wall peptidoglycan. The protein is UDP-N-acetylmuramoyl-L-alanyl-D-glutamate--2,6-diaminopimelate ligase of Xanthomonas oryzae pv. oryzae (strain MAFF 311018).